Consider the following 250-residue polypeptide: Ribonucleotide monophosphatase NagD (250 aa).

Mg(2+) contacts are provided by aspartate 9 and aspartate 11. The active site involves aspartate 11. Substrate contacts are provided by residues aspartate 11, 42 to 43, and lysine 176; that span reads TN. Aspartate 201 contacts Mg(2+). A substrate-binding site is contributed by 202–205; the sequence is NLRT.

The protein belongs to the HAD-like hydrolase superfamily. NagD family. Monomer. Requires Mg(2+) as cofactor. Mn(2+) is required as a cofactor. The cofactor is Co(2+). It depends on Zn(2+) as a cofactor.

It carries out the reaction a ribonucleoside 5'-phosphate + H2O = a ribonucleoside + phosphate. Catalyzes the dephosphorylation of an unusually broad range of substrate including deoxyribo- and ribonucleoside tri-, di-, and monophosphates, as well as polyphosphate and glucose-1-P (Glu1P). The chain is Ribonucleotide monophosphatase NagD (nagD) from Escherichia coli O157:H7.